Here is an 824-residue protein sequence, read N- to C-terminus: AMP deaminase 2 (824 aa).

The segment at 1 to 43 (MASYPGPGKSKAKYPFKKRAGLQASAAAPEARSGLGASPLQSA) is disordered. A compositionally biased stretch (basic residues) spans 10–20 (SKAKYPFKKRA). The residue at position 44 (Arg-44) is an Omega-N-methylarginine. Phosphoserine occurs at positions 45, 63, and 79. Tyr-90 carries the phosphotyrosine modification. Ser-96 and Ser-113 each carry phosphoserine. The residue at position 133 (Thr-133) is a Phosphothreonine. Ser-135 and Ser-137 each carry phosphoserine. The Zn(2+) site is built by His-364 and His-366. Substrate-binding positions include His-366 and 435 to 440 (KFNAKY). Position 633 (His-633) interacts with Zn(2+). Glu-636 provides a ligand contact to substrate. His-655 functions as the Proton acceptor in the catalytic mechanism. Asp-710 is a binding site for Zn(2+). Residue 711-714 (DPLQ) participates in substrate binding.

It belongs to the metallo-dependent hydrolases superfamily. Adenosine and AMP deaminases family. Homotetramer. Requires Zn(2+) as cofactor.

The enzyme catalyses AMP + H2O + H(+) = IMP + NH4(+). It functions in the pathway purine metabolism; IMP biosynthesis via salvage pathway; IMP from AMP: step 1/1. AMP deaminase plays a critical role in energy metabolism. Catalyzes the deamination of AMP to IMP and plays an important role in the purine nucleotide cycle. This is AMP deaminase 2 from Mus musculus (Mouse).